The sequence spans 312 residues: Dihydroorotate dehydrogenase B (NAD(+)), catalytic subunit (312 aa).

FMN-binding positions include Ser23 and 47–48 (KA). Substrate contacts are provided by residues Lys47 and 71 to 75 (NAIGL). Positions 102 and 130 each coordinate FMN. Position 130 (Asn130) interacts with substrate. Cys133 acts as the Nucleophile in catalysis. FMN is bound by residues Lys168 and Ile194. Residue 195 to 196 (NT) participates in substrate binding. FMN-binding positions include Gly220, 246 to 247 (GG), and 268 to 269 (GT).

The protein belongs to the dihydroorotate dehydrogenase family. Type 1 subfamily. Heterotetramer of 2 PyrK and 2 PyrD type B subunits. The cofactor is FMN.

The protein resides in the cytoplasm. It carries out the reaction (S)-dihydroorotate + NAD(+) = orotate + NADH + H(+). It participates in pyrimidine metabolism; UMP biosynthesis via de novo pathway; orotate from (S)-dihydroorotate (NAD(+) route): step 1/1. Functionally, catalyzes the conversion of dihydroorotate to orotate with NAD(+) as electron acceptor. The sequence is that of Dihydroorotate dehydrogenase B (NAD(+)), catalytic subunit (pyrDB) from Enterococcus faecalis (strain ATCC 700802 / V583).